The primary structure comprises 57 residues: Small ribosomal subunit protein bS21 (57 aa).

A disordered region spans residues 35–57 (REHYEKPSVKRKKKAEAARKKKF). Positions 43 to 57 (VKRKKKAEAARKKKF) are enriched in basic residues.

This sequence belongs to the bacterial ribosomal protein bS21 family.

In Alkaliphilus metalliredigens (strain QYMF), this protein is Small ribosomal subunit protein bS21.